A 309-amino-acid polypeptide reads, in one-letter code: Tagatose-6-phosphate kinase 1 (309 aa).

The protein belongs to the carbohydrate kinase PfkB family. LacC subfamily.

It carries out the reaction D-tagatofuranose 6-phosphate + ATP = D-tagatofuranose 1,6-bisphosphate + ADP + H(+). It functions in the pathway carbohydrate metabolism; D-tagatose 6-phosphate degradation; D-glyceraldehyde 3-phosphate and glycerone phosphate from D-tagatose 6-phosphate: step 1/2. The protein is Tagatose-6-phosphate kinase 1 of Streptococcus agalactiae serotype III (strain NEM316).